The chain runs to 346 residues: Phosphate acyltransferase (346 aa).

Belongs to the PlsX family. As to quaternary structure, homodimer. Probably interacts with PlsY.

The protein resides in the cytoplasm. It catalyses the reaction a fatty acyl-[ACP] + phosphate = an acyl phosphate + holo-[ACP]. Its pathway is lipid metabolism; phospholipid metabolism. Catalyzes the reversible formation of acyl-phosphate (acyl-PO(4)) from acyl-[acyl-carrier-protein] (acyl-ACP). This enzyme utilizes acyl-ACP as fatty acyl donor, but not acyl-CoA. This is Phosphate acyltransferase from Geotalea daltonii (strain DSM 22248 / JCM 15807 / FRC-32) (Geobacter daltonii).